The following is a 242-amino-acid chain: Putative ABC transporter ATP-binding protein TTE0246 (242 aa).

In terms of domain architecture, ABC transporter spans 5-242 (FELKNVSYFY…EKLLLKANLI (238 aa)). 38–45 (GANGSGKS) is an ATP binding site.

The protein belongs to the ABC transporter superfamily.

Its subcellular location is the cell membrane. Its function is as follows. Probably part of an ABC transporter complex. Responsible for energy coupling to the transport system. The protein is Putative ABC transporter ATP-binding protein TTE0246 of Caldanaerobacter subterraneus subsp. tengcongensis (strain DSM 15242 / JCM 11007 / NBRC 100824 / MB4) (Thermoanaerobacter tengcongensis).